The sequence spans 199 residues: Recombination protein RecR (199 aa).

The C4-type zinc finger occupies 58–73; that stretch reads CSVCYNLSETELCRIC. The 96-residue stretch at 81–176 folds into the Toprim domain; the sequence is TRLCVVEQPR…EITRLARGIT (96 aa).

It belongs to the RecR family.

In terms of biological role, may play a role in DNA repair. It seems to be involved in an RecBC-independent recombinational process of DNA repair. It may act with RecF and RecO. The sequence is that of Recombination protein RecR from Rhodopirellula baltica (strain DSM 10527 / NCIMB 13988 / SH1).